The sequence spans 575 residues: Phosphoenolpyruvate-protein phosphotransferase (575 aa).

Residue His189 is the Tele-phosphohistidine intermediate of the active site. Phosphoenolpyruvate is bound by residues Arg296 and Arg332. Residues Glu431 and Asp455 each coordinate Mg(2+). Phosphoenolpyruvate is bound by residues Asn454–Asp455 and Arg465. Cys502 acts as the Proton donor in catalysis.

Belongs to the PEP-utilizing enzyme family. As to quaternary structure, homodimer. The cofactor is Mg(2+).

The protein localises to the cytoplasm. The enzyme catalyses L-histidyl-[protein] + phosphoenolpyruvate = N(pros)-phospho-L-histidyl-[protein] + pyruvate. Functionally, general (non sugar-specific) component of the phosphoenolpyruvate-dependent sugar phosphotransferase system (sugar PTS). This major carbohydrate active-transport system catalyzes the phosphorylation of incoming sugar substrates concomitantly with their translocation across the cell membrane. Enzyme I transfers the phosphoryl group from phosphoenolpyruvate (PEP) to the phosphoryl carrier protein (HPr). The polypeptide is Phosphoenolpyruvate-protein phosphotransferase (ptsI) (Haemophilus influenzae (strain ATCC 51907 / DSM 11121 / KW20 / Rd)).